We begin with the raw amino-acid sequence, 249 residues long: DNA repair protein RecO (249 aa).

It belongs to the RecO family.

Involved in DNA repair and RecF pathway recombination. The polypeptide is DNA repair protein RecO (Exiguobacterium sibiricum (strain DSM 17290 / CCUG 55495 / CIP 109462 / JCM 13490 / 255-15)).